Consider the following 313-residue polypeptide: 4-hydroxyproline 2-epimerase (313 aa).

The disordered stretch occupies residues 1 to 23; it reads MHVIDSHTGGEPTRVILSGGPHL. C85 functions as the Proton acceptor in the catalytic mechanism. Residues 86-87, H205, and D231 each bind substrate; that span reads GH. C235 functions as the Proton donor in the catalytic mechanism. 236-237 is a binding site for substrate; sequence GT.

Belongs to the proline racemase family.

It catalyses the reaction trans-4-hydroxy-L-proline = cis-4-hydroxy-D-proline. Catalyzes the epimerization of trans-4-hydroxy-L-proline (t4LHyp) to cis-4-hydroxy-D-proline (c4DHyp). Is likely involved in a degradation pathway that converts t4LHyp to alpha-ketoglutarate. Displays no proline racemase activity. This Ruegeria pomeroyi (strain ATCC 700808 / DSM 15171 / DSS-3) (Silicibacter pomeroyi) protein is 4-hydroxyproline 2-epimerase.